Reading from the N-terminus, the 273-residue chain is Cell wall mannoprotein 1 (273 aa).

Positions 1 to 17 (MRFSAIFTLGLAGTALA) are cleaved as a signal peptide. Positions 173–247 (DVSDSAPSSS…GSASATSPPL (75 aa)) are disordered. Positions 177 to 247 (SAPSSSAGSS…GSASATSPPL (71 aa)) are enriched in low complexity.

The protein belongs to the cell wall mannoprotein 1 family. Post-translationally, galactomannoprotein, glycosylated.

It is found in the secreted. Its subcellular location is the cell wall. Its function is as follows. Constitutive protein of the cell wall. Antigen target of host humoral immune response. This is Cell wall mannoprotein 1 from Aspergillus flavus.